The chain runs to 182 residues: MHLIVGLGNPGSQYELTYHNIGFIIVDAICKHWNFQSFSKKADCLITSSVINDNKIMLMKPYSFMNNSGIPVARIRNFYKFSLDNVIVIHDDADLEPGRIKIKKGGGSAGHNGLKSIDSSIGNDYWRLRFGIGRSDSQRSLADYVLSKFSNLDDVIPLVERIAQNIHLMLQGNNIAFTNSIV.

Tyrosine 14 is a tRNA binding site. The active-site Proton acceptor is histidine 19. TRNA-binding residues include phenylalanine 64, asparagine 66, and asparagine 112.

It belongs to the PTH family. In terms of assembly, monomer.

Its subcellular location is the cytoplasm. The catalysed reaction is an N-acyl-L-alpha-aminoacyl-tRNA + H2O = an N-acyl-L-amino acid + a tRNA + H(+). Its function is as follows. Hydrolyzes ribosome-free peptidyl-tRNAs (with 1 or more amino acids incorporated), which drop off the ribosome during protein synthesis, or as a result of ribosome stalling. Functionally, catalyzes the release of premature peptidyl moieties from peptidyl-tRNA molecules trapped in stalled 50S ribosomal subunits, and thus maintains levels of free tRNAs and 50S ribosomes. The chain is Peptidyl-tRNA hydrolase from Wolbachia sp. subsp. Brugia malayi (strain TRS).